We begin with the raw amino-acid sequence, 593 residues long: Dihydroxy-acid dehydratase (593 aa).

Positions 1 to 17 (MSQQTEPDDDAALDGDE) are enriched in acidic residues. The disordered stretch occupies residues 1–40 (MSQQTEPDDDAALDGDEPGAYGKDERLRSREVTEGPERAP). The span at 22 to 40 (GKDERLRSREVTEGPERAP) shows a compositional bias: basic and acidic residues. Cys72 serves as a coordination point for [2Fe-2S] cluster. Asp104 is a Mg(2+) binding site. Cys145 contacts [2Fe-2S] cluster. The Mg(2+) site is built by Asp146 and Lys147. Residue Lys147 is modified to N6-carboxylysine. Cys217 serves as a coordination point for [2Fe-2S] cluster. Glu475 contributes to the Mg(2+) binding site. The Proton acceptor role is filled by Ser501.

Belongs to the IlvD/Edd family. In terms of assembly, homodimer. The cofactor is [2Fe-2S] cluster. Requires Mg(2+) as cofactor.

It catalyses the reaction (2R)-2,3-dihydroxy-3-methylbutanoate = 3-methyl-2-oxobutanoate + H2O. The catalysed reaction is (2R,3R)-2,3-dihydroxy-3-methylpentanoate = (S)-3-methyl-2-oxopentanoate + H2O. It participates in amino-acid biosynthesis; L-isoleucine biosynthesis; L-isoleucine from 2-oxobutanoate: step 3/4. It functions in the pathway amino-acid biosynthesis; L-valine biosynthesis; L-valine from pyruvate: step 3/4. Its function is as follows. Functions in the biosynthesis of branched-chain amino acids. Catalyzes the dehydration of (2R,3R)-2,3-dihydroxy-3-methylpentanoate (2,3-dihydroxy-3-methylvalerate) into 2-oxo-3-methylpentanoate (2-oxo-3-methylvalerate) and of (2R)-2,3-dihydroxy-3-methylbutanoate (2,3-dihydroxyisovalerate) into 2-oxo-3-methylbutanoate (2-oxoisovalerate), the penultimate precursor to L-isoleucine and L-valine, respectively. This chain is Dihydroxy-acid dehydratase, found in Natronomonas pharaonis (strain ATCC 35678 / DSM 2160 / CIP 103997 / JCM 8858 / NBRC 14720 / NCIMB 2260 / Gabara) (Halobacterium pharaonis).